The chain runs to 800 residues: Phosphate transporter PHO1 homolog 9 (800 aa).

One can recognise an SPX domain in the interval 1–346 (MKFGREFETQ…SRNASKPYLN (346 aa)). Residues 1–398 (MKFGREFETQ…KTKREKHRIT (398 aa)) are Cytoplasmic-facing. 3 disordered regions span residues 38–77 (QKQQ…PGLS), 91–119 (NRAS…HNHH), and 212–234 (PDLN…PAPS). Residues 42-51 (RPPPPPPPPS) show a composition bias toward pro residues. Residues 63–75 (GEGGGGGGGGGPG) show a composition bias toward gly residues. The segment covering 95–119 (RSPKKSHKHHNPLSSKRHHHHHNHH) has biased composition (basic residues). The segment covering 216-229 (SVASAPSSPHSTMR) has biased composition (polar residues). Residues 399–419 (YFLGFFSGCAVALAIAITVLV) form a helical membrane-spanning segment. The Extracellular portion of the chain corresponds to 420 to 439 (HIRGLTKSEGRHQYMENIFP). The chain crosses the membrane as a helical span at residues 440–460 (LYSLFGFVAVHLFMYAADIYF). The Cytoplasmic portion of the chain corresponds to 461–483 (WSRYRVNYPFIFGFEQGNDLGYR). Residues 484–504 (EVLLVGSGLAVLTFGGVISNL) form a helical membrane-spanning segment. The Extracellular segment spans residues 505-520 (DMEMDPRTKSFSVITE). The helical transmembrane segment at 521–541 (LVPLALLVCLMMVLFCPFNII) threads the bilayer. At 542–670 (YRSSRYFFVG…IFEMKRGTYW (129 aa)) the chain is on the cytoplasmic side. Residues 606 to 800 (YDSEIYKELY…FQELGGSKSV (195 aa)) enclose the EXS domain. Residues 671-691 (LTVAVTTSSIATLFNTYWDIF) form a helical membrane-spanning segment. Over 692–718 (RDWGLMNRNSKNPWLRDKLLVPYKSIY) the chain is Extracellular. Residues 719–739 (FIVMVANVVLRLAWMQTVLGI) traverse the membrane as a helical segment. Residues 740 to 800 (KEAPFLHKRA…FQELGGSKSV (61 aa)) are Cytoplasmic-facing.

It belongs to the SYG1 (TC 2.A.94) family. Specifically expressed in pollen grains.

It is found in the cell membrane. Its function is as follows. May transport inorganic phosphate (Pi). In Arabidopsis thaliana (Mouse-ear cress), this protein is Phosphate transporter PHO1 homolog 9 (PHO1-H9).